Here is a 150-residue protein sequence, read N- to C-terminus: Endoribonuclease YbeY (150 aa).

Zn(2+) is bound by residues histidine 112, histidine 116, and histidine 122.

It belongs to the endoribonuclease YbeY family. Requires Zn(2+) as cofactor.

It is found in the cytoplasm. Single strand-specific metallo-endoribonuclease involved in late-stage 70S ribosome quality control and in maturation of the 3' terminus of the 16S rRNA. The protein is Endoribonuclease YbeY of Bdellovibrio bacteriovorus (strain ATCC 15356 / DSM 50701 / NCIMB 9529 / HD100).